The following is a 402-amino-acid chain: Type II NADH:quinone oxidoreductase (402 aa).

Residues 12-16, 39-40, and Val83 contribute to the FAD site; these read GAGYA and NK. Residue Glu172 is part of the active site. FAD contacts are provided by residues Asp302, 319 to 320, and Lys379; that span reads AQ.

This sequence belongs to the NADH dehydrogenase family. Homodimer in solution. Forms homotetramers; dimer of dimers. FAD is required as a cofactor.

It is found in the cell membrane. The enzyme catalyses a quinone + NADH + H(+) = a quinol + NAD(+). It catalyses the reaction a menaquinone + NADH + H(+) = a menaquinol + NAD(+). The catalysed reaction is a ubiquinone + NADH + H(+) = a ubiquinol + NAD(+). Its activity is regulated as follows. Inhibited by HQNO, a quinone derivative. Alternative, nonproton pumping NADH:quinone oxidoreductase that delivers electrons to the respiratory chain by oxidation of NADH and reduction of quinones, and contributes to the regeneration of NAD(+). Can use DMN, a menaquinone analog, 2,3-dimethoxy-5,6-dimethyl-benzoquinone (DDB), an ubiquinone analog, or 2,3,5,6-tetramethyl-1,4-benzoquinone (Duroquinone, DQ) a plastoquinone analog as electron acceptors. The chain is Type II NADH:quinone oxidoreductase from Staphylococcus aureus (strain NCTC 8325 / PS 47).